Here is a 432-residue protein sequence, read N- to C-terminus: 3-phosphoshikimate 1-carboxyvinyltransferase (432 aa).

3-phosphoshikimate contacts are provided by lysine 22, serine 23, and arginine 27. A phosphoenolpyruvate-binding site is contributed by lysine 22. Phosphoenolpyruvate is bound by residues glycine 96 and arginine 127. The 3-phosphoshikimate site is built by serine 173, serine 174, glutamine 175, serine 201, aspartate 316, asparagine 339, and lysine 343. Glutamine 175 serves as a coordination point for phosphoenolpyruvate. Aspartate 316 (proton acceptor) is an active-site residue. Residues arginine 347, arginine 391, and lysine 416 each coordinate phosphoenolpyruvate.

Belongs to the EPSP synthase family. In terms of assembly, monomer.

The protein localises to the cytoplasm. The enzyme catalyses 3-phosphoshikimate + phosphoenolpyruvate = 5-O-(1-carboxyvinyl)-3-phosphoshikimate + phosphate. Its pathway is metabolic intermediate biosynthesis; chorismate biosynthesis; chorismate from D-erythrose 4-phosphate and phosphoenolpyruvate: step 6/7. Functionally, catalyzes the transfer of the enolpyruvyl moiety of phosphoenolpyruvate (PEP) to the 5-hydroxyl of shikimate-3-phosphate (S3P) to produce enolpyruvyl shikimate-3-phosphate and inorganic phosphate. In Haemophilus influenzae (strain 86-028NP), this protein is 3-phosphoshikimate 1-carboxyvinyltransferase.